Consider the following 61-residue polypeptide: Probable tautomerase SAV1363 (61 aa).

The Proton acceptor; via imino nitrogen role is filled by Pro-2.

Belongs to the 4-oxalocrotonate tautomerase family.

In Staphylococcus aureus (strain Mu50 / ATCC 700699), this protein is Probable tautomerase SAV1363.